Reading from the N-terminus, the 515-residue chain is Aldehyde dehydrogenase tropH (515 aa).

238 to 243 provides a ligand contact to NAD(+); it reads GSVATG. The active-site Proton acceptor is Glu-260. The active-site Nucleophile is the Cys-295.

This sequence belongs to the aldehyde dehydrogenase family.

The catalysed reaction is an aldehyde + NAD(+) + H2O = a carboxylate + NADH + 2 H(+). The protein operates within secondary metabolite biosynthesis. Functionally, aldehyde dehydrogenase; part of the gene cluster that mediates the biosynthesis of the tropolone class of fungal maleic anhydrides. The pathway begins with the synthesis of 3-methylorcinaldehyde by the non-reducing polyketide synthase (PKS) tropA. 3-methylorcinaldehyde is the substrate for the FAD-dependent monooxygenase tropB to yield a dearomatized hydroxycyclohexadione. The 2-oxoglutarate-dependent dioxygenase tropC then performs the oxidative ring expansion to provide the first tropolone metabolite stipitaldehyde. Trop D converts stipitaldehyde into stipitacetal which is in turn converted to stipitalide by the short-chain dehydrogenase/reductase tropE. The next steps involve tropF, tropG, tropH, tropI and tropJ to form successive tropolone maleic anhydrides including stipitaldehydic, stipitatonic and stipitatic acids. In Talaromyces stipitatus (strain ATCC 10500 / CBS 375.48 / QM 6759 / NRRL 1006) (Penicillium stipitatum), this protein is Aldehyde dehydrogenase tropH.